A 409-amino-acid polypeptide reads, in one-letter code: Pyrophosphate--fructose 6-phosphate 1-phosphotransferase (409 aa).

Position 14 (glycine 14) interacts with diphosphate. Residue aspartate 123 participates in Mg(2+) binding. Residues 151 to 153 (TVD), 196 to 198 (MGR), glutamate 268, and 325 to 328 (YFAR) contribute to the substrate site. Residue aspartate 153 is the Proton acceptor of the active site.

It belongs to the phosphofructokinase type A (PFKA) family. PPi-dependent PFK group II subfamily. Clade 'P' sub-subfamily. Homodimer. The cofactor is Mg(2+).

Its subcellular location is the cytoplasm. The enzyme catalyses beta-D-fructose 6-phosphate + diphosphate = beta-D-fructose 1,6-bisphosphate + phosphate + H(+). It functions in the pathway carbohydrate degradation; glycolysis; D-glyceraldehyde 3-phosphate and glycerone phosphate from D-glucose: step 3/4. Its activity is regulated as follows. Non-allosteric. In terms of biological role, catalyzes the phosphorylation of D-fructose 6-phosphate, the first committing step of glycolysis. Uses inorganic phosphate (PPi) as phosphoryl donor instead of ATP like common ATP-dependent phosphofructokinases (ATP-PFKs), which renders the reaction reversible, and can thus function both in glycolysis and gluconeogenesis. Consistently, PPi-PFK can replace the enzymes of both the forward (ATP-PFK) and reverse (fructose-bisphosphatase (FBPase)) reactions. The sequence is that of Pyrophosphate--fructose 6-phosphate 1-phosphotransferase from Methylomonas methanica.